We begin with the raw amino-acid sequence, 137 residues long: Basic phospholipase A2 beta-bungarotoxin A-AL4 chain (137 aa).

Residues 1-10 (LAVCVSLLGA) form the signal peptide. Residues 11–18 (ANIPPQHL) constitute a propeptide that is removed on maturation. Intrachain disulfides connect Cys45/Cys137, Cys47/Cys63, Cys62/Cys118, Cys69/Cys111, Cys79/Cys104, and Cys97/Cys109. Residues Tyr46, Gly48, and Gly50 each coordinate Ca(2+). His66 is a catalytic residue. Ca(2+) is bound at residue Asp67. The active site involves Asp112.

This sequence belongs to the phospholipase A2 family. Group I subfamily. D49 sub-subfamily. Heterodimer; disulfide-linked. The A chains have phospholipase A2 activity and the B chains show homology with the basic protease inhibitors. The cofactor is Ca(2+). Expressed by the venom gland.

The protein resides in the secreted. The enzyme catalyses a 1,2-diacyl-sn-glycero-3-phosphocholine + H2O = a 1-acyl-sn-glycero-3-phosphocholine + a fatty acid + H(+). In terms of biological role, snake venom phospholipase A2 (PLA2) that inhibits neuromuscular transmission by blocking acetylcholine release from the nerve termini. PLA2 catalyzes the calcium-dependent hydrolysis of the 2-acyl groups in 3-sn-phosphoglycerides. The protein is Basic phospholipase A2 beta-bungarotoxin A-AL4 chain of Bungarus multicinctus (Many-banded krait).